Consider the following 308-residue polypeptide: Porphobilinogen deaminase (308 aa).

C241 carries the S-(dipyrrolylmethanemethyl)cysteine modification.

It belongs to the HMBS family. Monomer. Dipyrromethane is required as a cofactor.

The enzyme catalyses 4 porphobilinogen + H2O = hydroxymethylbilane + 4 NH4(+). It participates in porphyrin-containing compound metabolism; protoporphyrin-IX biosynthesis; coproporphyrinogen-III from 5-aminolevulinate: step 2/4. In terms of biological role, tetrapolymerization of the monopyrrole PBG into the hydroxymethylbilane pre-uroporphyrinogen in several discrete steps. The chain is Porphobilinogen deaminase from Staphylococcus aureus (strain bovine RF122 / ET3-1).